We begin with the raw amino-acid sequence, 270 residues long: Multi-heme protein MamP (270 aa).

Topologically, residues 1-6 (MNSKLV) are cytoplasmic. Positions 7 to 20 (LLVVGVVFALVLVI) form a transmembrane segment. The Lumenal segment spans residues 21 to 270 (GRQGGVVAPQ…GPCEACHVIN (250 aa)). The segment at 84-201 (NLKVFEGHWQ…GGLGFAQLEG (118 aa)) is PDZ. The short motif at 205–225 (ILPGDPRPHGYRGACTDCHPV) is the MCR (magnetochrome) 1 element. The heme site is built by C219, C222, H223, C263, C266, and H267. An MCR 2 motif is present at residues 245–269 (ITRDAVTRGVSPHEVRGPCEACHVI).

It belongs to the magnetosome MamP family. In terms of assembly, homodimer. Requires heme as cofactor. Post-translationally, subject to proteolytic cleavage which requires both MamE and MamO.

The protein resides in the cell inner membrane. In terms of biological role, involved in redox-control of magnetite formation. Oxidizes Fe(2+) at alkaline pH; successively forms ferrihydrite (Fe(3+)(2)O(3) 0.5 H(2)O) then magnetite (Fe(3)O(4)) from an Fe(2+) solution. This chain is Multi-heme protein MamP, found in Magnetospirillum gryphiswaldense (strain DSM 6361 / JCM 21280 / NBRC 15271 / MSR-1).